The following is a 329-amino-acid chain: Ribosomal RNA small subunit methyltransferase H (329 aa).

S-adenosyl-L-methionine is bound by residues 44-46, D62, D110, and Q117; that span reads GGY. The tract at residues 297–329 is disordered; it reads APAELAANPRARSARLRSAERTSAPARRLGDAA.

Belongs to the methyltransferase superfamily. RsmH family.

The protein resides in the cytoplasm. It carries out the reaction cytidine(1402) in 16S rRNA + S-adenosyl-L-methionine = N(4)-methylcytidine(1402) in 16S rRNA + S-adenosyl-L-homocysteine + H(+). Its function is as follows. Specifically methylates the N4 position of cytidine in position 1402 (C1402) of 16S rRNA. The sequence is that of Ribosomal RNA small subunit methyltransferase H from Rhodospirillum centenum (strain ATCC 51521 / SW).